A 354-amino-acid chain; its full sequence is Uroporphyrinogen decarboxylase (354 aa).

Substrate contacts are provided by residues 27–31, Asp77, Tyr154, Thr209, and His327; that span reads RQAGR.

This sequence belongs to the uroporphyrinogen decarboxylase family. Homodimer.

The protein localises to the cytoplasm. The catalysed reaction is uroporphyrinogen III + 4 H(+) = coproporphyrinogen III + 4 CO2. The protein operates within porphyrin-containing compound metabolism; protoporphyrin-IX biosynthesis; coproporphyrinogen-III from 5-aminolevulinate: step 4/4. In terms of biological role, catalyzes the decarboxylation of four acetate groups of uroporphyrinogen-III to yield coproporphyrinogen-III. The polypeptide is Uroporphyrinogen decarboxylase (Sodalis glossinidius (strain morsitans)).